The sequence spans 341 residues: 4-hydroxy-2-oxovalerate aldolase (341 aa).

The Pyruvate carboxyltransferase domain maps to 9-259 (VRITEVCLRD…KLDIDLYKMM (251 aa)). Substrate is bound at residue 17–18 (RD). Residue D18 coordinates Mn(2+). Catalysis depends on H21, which acts as the Proton acceptor. Substrate-binding residues include S171 and H198. H198 and H200 together coordinate Mn(2+). Position 289 (Y289) interacts with substrate.

Belongs to the 4-hydroxy-2-oxovalerate aldolase family.

It carries out the reaction (S)-4-hydroxy-2-oxopentanoate = acetaldehyde + pyruvate. The sequence is that of 4-hydroxy-2-oxovalerate aldolase (dmpG) from Bacillus cereus (strain 03BB102).